Here is a 337-residue protein sequence, read N- to C-terminus: Mitochondrial glutathione transporter SLC25A40 (337 aa).

Solcar repeat units lie at residues 14–132 (VTPL…LSTF), 140–224 (NETR…LRRW), and 234–328 (STFM…GKGF). Transmembrane regions (helical) follow at residues 20–40 (MMASCAGAVVTSLMVTPLDVV), 104–124 (LWSGLPPTLVMAVPATVIYFT), 146–166 (IVAGIVARFGAVTMISPLELI), 200–221 (WAPTILRDVPFSAMYWYNYENL), 240–260 (FTAGALSGSFAAVATLPFDVV), and 299–319 (GLFTGLIPRLVKIVPACAIMI).

The protein belongs to the mitochondrial carrier (TC 2.A.29) family. In terms of tissue distribution, widely expressed at low level.

Its subcellular location is the mitochondrion inner membrane. The catalysed reaction is glutathione(in) = glutathione(out). Probable mitochondrial transporter required for glutathione import into mitochondria. Glutathione, which plays key roles in oxidative metabolism, is produced exclusively in the cytosol and is imported in many organelles. Mitochondrial glutathione is required for the activity and stability of proteins containing iron-sulfur clusters, as well as erythropoiesis. In Rattus norvegicus (Rat), this protein is Mitochondrial glutathione transporter SLC25A40.